The primary structure comprises 464 residues: Argininosuccinate lyase 2 (464 aa).

Belongs to the lyase 1 family. Argininosuccinate lyase subfamily.

Its subcellular location is the cytoplasm. It catalyses the reaction 2-(N(omega)-L-arginino)succinate = fumarate + L-arginine. Its pathway is amino-acid biosynthesis; L-arginine biosynthesis; L-arginine from L-ornithine and carbamoyl phosphate: step 3/3. The sequence is that of Argininosuccinate lyase 2 from Pseudomonas fluorescens (strain Pf0-1).